Reading from the N-terminus, the 578-residue chain is MLQDWCRRMGVNAERSLLILDIPDDCEEHEFQEAVRAALSPLGRYRVLIKVFRKELGARAALVEFAEGLNQSLIPRQIAGKGGPWKVISLPQALDAEFQDIPSFPAQPQGQAVARGAGEAGAAGEAGSVGEAGGVNEERSAGEDEAGGIGEAGGVGEAGAAGEAGAAGEAGAAGEAGGAGEAGGAGEAGGAGEEGGTGEEGGAGEAGGAGEEGGEDEAGAAGEAVGAGVVEAWTQSWRQTLRPLVKTMAYRELRPFSGREQPGCVEESFESWLEDAKDMLQLWCHASERERRRRLLDSLDGLALDIVSGLLEEDPDFSAQDCLTALGQVFRSRDTWMTSRMKFLTCTQGPQEGLFAFVVRLEGLLQKAVEKGAVHPAMANHLRLRQVLSRARPSEALQDTLRRMQLERRPPDFLRLLRLIRDMEAWAASLARSQQGVAWAAAPVESEDPAAAQASPAQGDASEADPGAEDADEAASTTKEAARVAPATGEDENAPAGLEGLGQGRSPDAPGGLPARMGSAVDMAPGGPSWEPEGLVQVGGQEAEEPPQEGLKPILEESENEDEDGAGEAGKPKSPPGK.

2 disordered regions span residues 106–221 (AQPQ…AGAA) and 441–578 (AAPV…PPGK). Positions 112-129 (AVARGAGEAGAAGEAGSV) are enriched in low complexity. Residues 147–159 (GGIGEAGGVGEAG) are compositionally biased toward gly residues. Residues 160–173 (AAGEAGAAGEAGAA) are compositionally biased toward low complexity. Over residues 174–211 (GEAGGAGEAGGAGEAGGAGEEGGTGEEGGAGEAGGAGE) the composition is skewed to gly residues. Low complexity predominate over residues 449–461 (PAAAQASPAQGDA). Acidic residues-rich tracts occupy residues 462-473 (SEADPGAEDADE) and 556-566 (EESENEDEDGA).

This chain is Paraneoplastic antigen Ma6F, found in Homo sapiens (Human).